The following is a 230-amino-acid chain: Small ribosomal subunit protein uS3c (230 aa).

One can recognise a KH type-2 domain in the interval 39-109; it reads IRSFIHGKLS…QIRVNVVEIS (71 aa).

It belongs to the universal ribosomal protein uS3 family. Part of the 30S ribosomal subunit.

The protein resides in the plastid. The protein localises to the chloroplast. This is Small ribosomal subunit protein uS3c (rps3) from Porphyra purpurea (Red seaweed).